The following is a 295-amino-acid chain: Outer surface protein B (295 aa).

The first 16 residues, 1–16 (MKQYLLGFTLVFALIA), serve as a signal peptide directing secretion. A lipid anchor (N-palmitoyl cysteine) is attached at Cys17. Cys17 is lipidated: S-diacylglycerol cysteine.

It localises to the cell outer membrane. This Borreliella burgdorferi (Lyme disease spirochete) protein is Outer surface protein B (ospB).